The chain runs to 294 residues: Protein farnesyltransferase/geranylgeranyltransferase type-1 subunit alpha (294 aa).

5 PFTA repeats span residues 57–91 (YSLRALNLTGFLIMNNPAHYTVWAYRFQILNHTPS), 92–125 (YIDNELEWLDEIAEDFQKNYQVWHHRQKILSLTK), 126–160 (NYERELEFTKKMFEIDSKNYHVWSYRVWILQNFND), 161–194 (YSQELKLTNELLEKDIYNNSAWNHRFYVLFETSK), and 199–233 (SLEEELNYLKDKILFAPDNQSAWNYLCGVLDKSGP).

This sequence belongs to the protein prenyltransferase subunit alpha family. Heterodimer of an alpha(cwp1) and a beta(cpp1 or cwg2) subunit. Mg(2+) serves as cofactor.

It catalyses the reaction L-cysteinyl-[protein] + (2E,6E)-farnesyl diphosphate = S-(2E,6E)-farnesyl-L-cysteinyl-[protein] + diphosphate. It carries out the reaction geranylgeranyl diphosphate + L-cysteinyl-[protein] = S-geranylgeranyl-L-cysteinyl-[protein] + diphosphate. Its function is as follows. Catalyzes the transfer of a farnesyl or geranyl-geranyl moiety from farnesyl or geranyl-geranyl diphosphate to a cysteine at the fourth position from the C-terminus of several proteins having the C-terminal sequence Cys-aliphatic-aliphatic-X. The alpha(cwp1) subunit is thought to participate in a stable complex with the substrate. The beta(cpp1 or cwg2) subunits bind the peptide substrate. This is Protein farnesyltransferase/geranylgeranyltransferase type-1 subunit alpha (cwp1) from Schizosaccharomyces pombe (strain 972 / ATCC 24843) (Fission yeast).